The primary structure comprises 357 residues: Ferrochelatase (357 aa).

Fe cation is bound by residues H193 and E272.

It belongs to the ferrochelatase family.

The protein localises to the cytoplasm. It carries out the reaction heme b + 2 H(+) = protoporphyrin IX + Fe(2+). It functions in the pathway porphyrin-containing compound metabolism; protoheme biosynthesis; protoheme from protoporphyrin-IX: step 1/1. Catalyzes the ferrous insertion into protoporphyrin IX. The chain is Ferrochelatase from Hyphomonas neptunium (strain ATCC 15444).